We begin with the raw amino-acid sequence, 492 residues long: Transmembrane protein 104 homolog (492 aa).

At 1 to 18 (MQSNTDSSGTSGTYSQTV) the chain is on the cytoplasmic side. A helical transmembrane segment spans residues 19–39 (GLLYVFNLIVGTGALALPKAF). Residues 40-45 (QSAGWL) are Extracellular-facing. The chain crosses the membrane as a helical span at residues 46–66 (LSISLLTFSAFMSYVAATFVI). The Cytoplasmic portion of the chain corresponds to 67-114 (EALSVANAVLSKKRRVEYDDVVVADGPSTFEIAKKVEVSEMASMFLSK). The helical transmembrane segment at 115–135 (VSLVFSYFAIIIYLFGDLAIY) threads the bilayer. Over 136 to 177 (STTVPKSAMNIVCSTINATIVKSSDPCHESWPEILTRMTVYR) the chain is Extracellular. N152 carries N-linked (GlcNAc...) asparagine glycosylation. Residues 178–198 (FFVIVFVVVVCLPMVIAGITK) form a helical membrane-spanning segment. Residues 199-210 (TRHIQIMTTLSR) lie on the Cytoplasmic side of the membrane. A helical transmembrane segment spans residues 211-231 (WAAFILMISLATMQLSSQGAA). Over 232–238 (AHPPAYN) the chain is Extracellular. A helical transmembrane segment spans residues 239-259 (FHGFGSLFGCAVYAFMCHHSI). Residues 260–275 (PSLITPMRTKENVFGK) lie on the Cytoplasmic side of the membrane. Residues 276 to 296 (IAVVYGIVGVFYFTLSLTGAF) form a helical membrane-spanning segment. Over 297–325 (AFEHVQDIYTLNFLHDDNTSLVYSIIDYF) the chain is Extracellular. N314 carries N-linked (GlcNAc...) asparagine glycosylation. Residues 326–346 (LALFPIITLTSSYPIIALTLI) traverse the membrane as a helical segment. Over 347–391 (NNFKVVKDILCPKTGQENESLLEADNQVEDNDTDDEREARNGNPK) the chain is Cytoplasmic. Over residues 367 to 382 (LLEADNQVEDNDTDDE) the composition is skewed to acidic residues. Positions 367-387 (LLEADNQVEDNDTDDEREARN) are disordered. A helical membrane pass occupies residues 392–412 (TIFDVLVPTLVLALPTFLSLL). The Extracellular segment spans residues 413 to 415 (TDD). Residues 416-436 (MLLLASITGSFPGVAVQFAIP) traverse the membrane as a helical segment. Topologically, residues 437 to 466 (CLLVTAARKHARSVLNFPVPRKNNSPFQSR) are cytoplasmic. The chain crosses the membrane as a helical span at residues 467–487 (FWIMLISSWAGFSMIMVLLNL). The Extracellular portion of the chain corresponds to 488 to 492 (VGVKF).

The protein belongs to the TMEM104 family.

It is found in the membrane. This is Transmembrane protein 104 homolog from Caenorhabditis briggsae.